Consider the following 449-residue polypeptide: Guanine nucleotide-binding protein alpha-2 subunit (449 aa).

A disordered region spans residues 1-91; it reads MGLCASSEKN…TATANTSGSQ (91 aa). G2 carries N-myristoyl glycine lipidation. The S-palmitoyl cysteine moiety is linked to residue C4. 2 stretches are compositionally biased toward polar residues: residues 7-23 and 38-48; these read SEKN…SAGS and QKTVRTVNTAN. Low complexity predominate over residues 49-59; the sequence is QQEKQQQRQQQ. Positions 72-91 are enriched in polar residues; that stretch reads NGSINNAISPTATANTSGSQ. Residues 122–448 form the G-alpha domain; that stretch reads KELKVLLLGA…ENTLKDSGVL (327 aa). The G1 motif stretch occupies residues 125-138; it reads KVLLLGAGESGKST. GTP contacts are provided by E133, S134, G135, K136, S137, T138, D245, L270, T276, G299, N365, K366, D368, and A420. S137 lines the Mg(2+) pocket. The interval 268–276 is G2 motif; sequence DILRSRQMT. T276 contributes to the Mg(2+) binding site. The segment at 292 to 301 is G3 motif; the sequence is MHIYDVGGQR. Residues 361–368 form a G4 motif region; it reads VLFLNKID. The interval 418–423 is G5 motif; the sequence is TQATDT.

This sequence belongs to the G-alpha family. G(q) subfamily. As to quaternary structure, g proteins are composed of 3 units; alpha, beta and gamma. The alpha chain contains the guanine nucleotide binding site. GPA2 interacts with the kelch repeat beta-mimic proteins GPB1 and GPB2 and with the gamma subunit GPG1. Interacts with the G protein coupled receptor GPR1. Also interacts with regulators of G protein signaling (RGS) protein RGS2. Mg(2+) is required as a cofactor. Myristoylation at Gly-2 and palmitoylation at Cys-4 are required for membrane localization and function of the protein.

Its subcellular location is the cell membrane. Alternates between an inactive form bound to GDP and an active form bound to GTP. Activated by the G protein coupled receptor (GPCR) GPR1, which serves as a guanine nucleotide-exchange factor (GEF), and inactivated by RGS2, acting as a GTPase-activating protein (GAP) for GPA2. Functionally, alpha subunit of the heterotrimeric guanine nucleotide-binding protein (G protein) involved in glucose-induced cAMP signaling. Binds to its cognate transmembrane receptor GPR1, which senses extracellular carbon sources, and activates cAMP-PKA signaling and governs diploid pseudohyphal differentiation and haploid invasive growth. The G protein beta-mimic proteins GPB1 and GPB2 inhibit GPA2-GPR1 coupling, probably to reduce signaling in the absence of glucose. This chain is Guanine nucleotide-binding protein alpha-2 subunit (GPA2), found in Saccharomyces cerevisiae (strain ATCC 204508 / S288c) (Baker's yeast).